Here is a 1100-residue protein sequence, read N- to C-terminus: cGMP-inhibited 3',5'-cyclic phosphodiesterase 3B (1100 aa).

The segment covering 1 to 11 (MRKDERERDAP) has biased composition (basic and acidic residues). The interval 1–28 (MRKDERERDAPAMRSPPPPPASAASPPE) is interaction with RAPGEF3. Residues 1–29 (MRKDERERDAPAMRSPPPPPASAASPPES) form a disordered region. Position 15 is a phosphoserine (Ser15). The next 6 membrane-spanning stretches (helical) occupy residues 69-89 (AGARLSLGVLAAFVLAALLGA), 110-130 (LSLSPLFSIACAFFFLTCFLT), 140-160 (AGSWWLLALPACCYLGDFAAW), 170-190 (PAAAGRLCLVLSCVGLLTLAP), 198-218 (VLVLLFAGLVWWVSFSGLGAL), and 225-245 (LLSCLVGGAGCLLALGLDHFF). Ser273 carries the post-translational modification Phosphoserine; by PKB/AKT1 or PKB/AKT2. Residues Ser274 and Ser421 each carry the phosphoserine modification. Disordered stretches follow at residues 400-423 (RKLHKGLSGRTSFPTPQLRRSSGA) and 570-590 (EPDGTDHPSEKSGEEDSSVFS). Positions 408–423 (GRTSFPTPQLRRSSGA) are enriched in polar residues. Residues 415–439 (PQLRRSSGASSLLTNEHCSRWDRSS) form an interaction with PIK3R6 region. Residues 573-583 (GTDHPSEKSGE) are compositionally biased toward basic and acidic residues. A PDEase domain is found at 627 to 1061 (PNIDQEVSLD…KIWKEIIEEE (435 aa)). His713 (proton donor) is an active-site residue. His713 is a binding site for AMP. Mg(2+) is bound by residues His717, His797, Asp798, and Asp913. Asp798, Asp913, and Gln964 together coordinate AMP. Positions 993–1024 (EEGDDTESDDDDDDDDGDGGEELDSDDEETED) are enriched in acidic residues. A disordered region spans residues 993–1033 (EEGDDTESDDDDDDDDGDGGEELDSDDEETEDNLNPKPQRR). The stretch at 1044-1079 (MHHLTENHKIWKEIIEEEEEKCKAEGNKLQVDNASL) forms a coiled coil.

This sequence belongs to the cyclic nucleotide phosphodiesterase family. PDE3 subfamily. In terms of assembly, homodimer. Interacts with PIK3CG; regulates PDE3B activity and thereby cAMP levels in cells. Interacts with RAPGEF3 and PIK3R6; form a signaling complex that regulates phosphatidylinositol 3-kinase gamma in angiogenesis. Interacts with ABHD15; this interaction regulates PDE3B's stability and expression and, thereby, impacts the antilipolytic action of insulin. It depends on Mg(2+) as a cofactor. The cofactor is Mn(2+). Phosphorylation at Ser-273 mediates insulin-induced activation of PDE3B. In terms of tissue distribution, abundant in adipose tissues.

Its subcellular location is the membrane. It carries out the reaction a nucleoside 3',5'-cyclic phosphate + H2O = a nucleoside 5'-phosphate + H(+). The enzyme catalyses 3',5'-cyclic AMP + H2O = AMP + H(+). The catalysed reaction is 3',5'-cyclic GMP + H2O = GMP + H(+). Inhibited by cGMP. Functionally, cyclic nucleotide phosphodiesterase with a dual-specificity for the second messengers cAMP and cGMP, which are key regulators of many important physiological processes. Regulates angiogenesis by inhibiting the cAMP-dependent guanine nucleotide exchange factor RAPGEF3 and downstream phosphatidylinositol 3-kinase gamma-mediated signaling. Controls cardiac contractility by reducing cAMP concentration in cardiocytes. This chain is cGMP-inhibited 3',5'-cyclic phosphodiesterase 3B, found in Mus musculus (Mouse).